Here is a 196-residue protein sequence, read N- to C-terminus: 3-dehydroquinate dehydratase (196 aa).

Residues 23 to 25 (ELR) and arginine 45 each bind 3-dehydroquinate. The active-site Proton donor/acceptor is the histidine 98. Residue lysine 122 is the Schiff-base intermediate with substrate of the active site. Arginine 159 and glutamine 182 together coordinate 3-dehydroquinate.

It belongs to the type-I 3-dehydroquinase family. As to quaternary structure, homodimer.

The enzyme catalyses 3-dehydroquinate = 3-dehydroshikimate + H2O. It functions in the pathway metabolic intermediate biosynthesis; chorismate biosynthesis; chorismate from D-erythrose 4-phosphate and phosphoenolpyruvate: step 3/7. Its function is as follows. Involved in the third step of the chorismate pathway, which leads to the biosynthesis of aromatic amino acids. Catalyzes the cis-dehydration of 3-dehydroquinate (DHQ) and introduces the first double bond of the aromatic ring to yield 3-dehydroshikimate. The sequence is that of 3-dehydroquinate dehydratase from Archaeoglobus fulgidus (strain ATCC 49558 / DSM 4304 / JCM 9628 / NBRC 100126 / VC-16).